The chain runs to 691 residues: Serotransferrin-2 (691 aa).

The N-terminal stretch at 1 to 18 (MKLLLLSALLGCLATAYA) is a signal peptide. 2 consecutive Transferrin-like domains span residues 25–329 (VKWC…SLKK) and 340–670 (IKWC…SLRK). A disulfide bond links Cys28 and Cys50. Residues Asp74 and Tyr104 each coordinate Fe(3+). 3 cysteine pairs are disulfide-bonded: Cys127/Cys207, Cys172/Cys186, and Cys235/Cys249. Hydrogencarbonate contacts are provided by Thr129, Ser134, Gly136, and Trp137. Residue Asn169 is glycosylated (N-linked (GlcNAc...) asparagine). Tyr201 lines the Fe(3+) pocket. His257 is a Fe(3+) binding site. 2 disulfides stabilise this stretch: Cys343-Cys379 and Cys353-Cys370. Residues Asp394 and Tyr428 each coordinate Fe(3+). Cystine bridges form between Cys404/Cys682, Cys419/Cys643, Cys451/Cys530, Cys475/Cys671, Cys485/Cys499, Cys496/Cys513, and Cys570/Cys584. Residues Thr453, Arg457, Ala459, and Gly460 each coordinate hydrogencarbonate. A Fe(3+)-binding site is contributed by Tyr524. Position 592 (His592) interacts with Fe(3+).

It belongs to the transferrin family. In terms of assembly, monomer. As to expression, abundant in liver and serum with smaller amounts found in the stomach and kidney.

The protein resides in the secreted. Transferrins are iron binding transport proteins which can bind two Fe(3+) ions in association with the binding of an anion, usually bicarbonate. It is responsible for the transport of iron from sites of absorption and heme degradation to those of storage and utilization. Serum transferrin may also have a further role in stimulating cell proliferation. This Salmo salar (Atlantic salmon) protein is Serotransferrin-2 (tf2).